Reading from the N-terminus, the 642-residue chain is Probable serine/threonine-protein kinase drkA (642 aa).

The N-terminal stretch at 1 to 23 (MKKLPFLIIIIYIFLILISISSS) is a signal peptide. Residues 24-322 (IDYNYNNDID…KPTISLLKKY (299 aa)) are Extracellular-facing. Residues 106–128 (SENSGSGSNSNSNSKNTDSSTGP) show a composition bias toward low complexity. Residues 106 to 136 (SENSGSGSNSNSNSKNTDSSTGPTPSPISIN) form a disordered region. Asn-136, Asn-140, Asn-158, Asn-244, and Asn-271 each carry an N-linked (GlcNAc...) asparagine glycan. A helical transmembrane segment spans residues 323–343 (LIIGFSIVGGLLIIGGCFLLI). Topologically, residues 344–642 (RNRYRSSGYY…SDLQYVRQQL (299 aa)) are cytoplasmic. Positions 374–627 (IKIGVRIGKG…EQCLERLESI (254 aa)) constitute a Protein kinase domain. ATP-binding positions include 380–388 (IGKGNYGEV) and Lys-401. The Proton acceptor role is filled by Asp-497.

Belongs to the protein kinase superfamily. TKL Ser/Thr protein kinase family.

It localises to the membrane. The catalysed reaction is L-seryl-[protein] + ATP = O-phospho-L-seryl-[protein] + ADP + H(+). The enzyme catalyses L-threonyl-[protein] + ATP = O-phospho-L-threonyl-[protein] + ADP + H(+). This Dictyostelium discoideum (Social amoeba) protein is Probable serine/threonine-protein kinase drkA (drkA).